Reading from the N-terminus, the 248-residue chain is MTKNLLNYLNELEAWLTNYVNEAHAQGVVVGLSGGVDSAVVAAMTKKLFPQNHLTLVMHINNSELDHKATTALVEQLQLNNKQVDLEPPYRAMLQALTIDPQKELMVAGNLKARLRMACLYTHAQKHNYLVLGTGNFIEYSLGYFTKWGDGACDVAPLAFLLKSDVYALSQHFNVPELVIERAPTASLFAGQTDEAEMGLTYKELDQYFQGHLQLSATKQQRVDHLRQSSQHKRSLPKTFKPLYSFQI.

31–38 is a binding site for ATP; the sequence is GLSGGVDS. Asp37 lines the Mg(2+) pocket. Arg114 lines the deamido-NAD(+) pocket. Thr134 is a binding site for ATP. Residue Glu139 coordinates Mg(2+). Deamido-NAD(+) is bound by residues Lys147 and Asp154. ATP is bound by residues Lys163 and Thr185. 232–233 contributes to the deamido-NAD(+) binding site; it reads HK.

The protein belongs to the NAD synthetase family. As to quaternary structure, homodimer.

It catalyses the reaction deamido-NAD(+) + NH4(+) + ATP = AMP + diphosphate + NAD(+) + H(+). Its pathway is cofactor biosynthesis; NAD(+) biosynthesis; NAD(+) from deamido-NAD(+) (ammonia route): step 1/1. Catalyzes the ATP-dependent amidation of deamido-NAD to form NAD. Uses ammonia as a nitrogen source. This chain is NH(3)-dependent NAD(+) synthetase, found in Mycoplasma pneumoniae (strain ATCC 29342 / M129 / Subtype 1) (Mycoplasmoides pneumoniae).